The primary structure comprises 263 residues: Polyamine aminopropyltransferase (263 aa).

Residues 1–221 enclose the PABS domain; it reads MARHPYRRLR…AVMAFQSSPK (221 aa). Residues aspartate 98 and 126–127 each bind S-methyl-5'-thioadenosine; that span reads DG. The Proton acceptor role is filled by aspartate 144.

This sequence belongs to the spermidine/spermine synthase family. Homodimer or homotetramer.

The protein localises to the cytoplasm. It carries out the reaction S-adenosyl 3-(methylsulfanyl)propylamine + putrescine = S-methyl-5'-thioadenosine + spermidine + H(+). Its pathway is amine and polyamine biosynthesis; spermidine biosynthesis; spermidine from putrescine: step 1/1. Its function is as follows. Catalyzes the irreversible transfer of a propylamine group from the amino donor S-adenosylmethioninamine (decarboxy-AdoMet) to putrescine (1,4-diaminobutane) to yield spermidine. In Neisseria meningitidis serogroup A / serotype 4A (strain DSM 15465 / Z2491), this protein is Polyamine aminopropyltransferase.